Consider the following 1435-residue polypeptide: DNA polymerase III PolC-type (1435 aa).

Residues 420–576 form the Exonuclease domain; that stretch reads YVVFDVETTG…YDTEATAYIF (157 aa).

It belongs to the DNA polymerase type-C family. PolC subfamily.

It localises to the cytoplasm. The catalysed reaction is DNA(n) + a 2'-deoxyribonucleoside 5'-triphosphate = DNA(n+1) + diphosphate. Functionally, required for replicative DNA synthesis. This DNA polymerase also exhibits 3' to 5' exonuclease activity. The protein is DNA polymerase III PolC-type of Staphylococcus aureus.